The primary structure comprises 328 residues: Sulfate adenylyltransferase subunit 2 (328 aa).

The disordered stretch occupies residues 309–328 (RAIDKDQTASMEKKKQEGYF).

This sequence belongs to the PAPS reductase family. CysD subfamily. As to quaternary structure, heterodimer composed of CysD, the smaller subunit, and CysN.

The catalysed reaction is sulfate + ATP + H(+) = adenosine 5'-phosphosulfate + diphosphate. Its pathway is sulfur metabolism; hydrogen sulfide biosynthesis; sulfite from sulfate: step 1/3. In terms of biological role, with CysN forms the ATP sulfurylase (ATPS) that catalyzes the adenylation of sulfate producing adenosine 5'-phosphosulfate (APS) and diphosphate, the first enzymatic step in sulfur assimilation pathway. APS synthesis involves the formation of a high-energy phosphoric-sulfuric acid anhydride bond driven by GTP hydrolysis by CysN coupled to ATP hydrolysis by CysD. The polypeptide is Sulfate adenylyltransferase subunit 2 (Hyphomonas neptunium (strain ATCC 15444)).